The chain runs to 237 residues: Phosphoribosylaminoimidazole-succinocarboxamide synthase (237 aa).

It belongs to the SAICAR synthetase family.

It carries out the reaction 5-amino-1-(5-phospho-D-ribosyl)imidazole-4-carboxylate + L-aspartate + ATP = (2S)-2-[5-amino-1-(5-phospho-beta-D-ribosyl)imidazole-4-carboxamido]succinate + ADP + phosphate + 2 H(+). Its pathway is purine metabolism; IMP biosynthesis via de novo pathway; 5-amino-1-(5-phospho-D-ribosyl)imidazole-4-carboxamide from 5-amino-1-(5-phospho-D-ribosyl)imidazole-4-carboxylate: step 1/2. The polypeptide is Phosphoribosylaminoimidazole-succinocarboxamide synthase (Yersinia pseudotuberculosis serotype O:1b (strain IP 31758)).